The following is a 109-amino-acid chain: Sperm-specific class P protein 9/11 (109 aa).

In terms of domain architecture, MSP spans 2 to 109 (SLTADPPACT…TVTIPMSATA (108 aa)).

As to expression, expressed at higher level in testis.

The chain is Sperm-specific class P protein 9/11 (ssp-9) from Caenorhabditis elegans.